The following is a 271-amino-acid chain: Bifunctional protein FolD (271 aa).

NADP(+) is bound by residues 154–156 (GRS), serine 181, and isoleucine 222.

Belongs to the tetrahydrofolate dehydrogenase/cyclohydrolase family. In terms of assembly, homodimer.

The enzyme catalyses (6R)-5,10-methylene-5,6,7,8-tetrahydrofolate + NADP(+) = (6R)-5,10-methenyltetrahydrofolate + NADPH. The catalysed reaction is (6R)-5,10-methenyltetrahydrofolate + H2O = (6R)-10-formyltetrahydrofolate + H(+). The protein operates within one-carbon metabolism; tetrahydrofolate interconversion. Functionally, catalyzes the oxidation of 5,10-methylenetetrahydrofolate to 5,10-methenyltetrahydrofolate and then the hydrolysis of 5,10-methenyltetrahydrofolate to 10-formyltetrahydrofolate. The protein is Bifunctional protein FolD of Thermotoga petrophila (strain ATCC BAA-488 / DSM 13995 / JCM 10881 / RKU-1).